The primary structure comprises 336 residues: Small ribosomal subunit protein uS9m (336 aa).

Residues 32-81 (STTTTTTTTTTTTTSDEIPTTKPRFQSRFRRNQQPHQQQRSPYTSSQVTE) are disordered. Positions 33 to 45 (TTTTTTTTTTTTT) are enriched in low complexity. The segment covering 65 to 81 (QPHQQQRSPYTSSQVTE) has biased composition (polar residues).

It belongs to the universal ribosomal protein uS9 family. As to quaternary structure, component of the mitochondrial small ribosomal subunit (mt-SSU).

The protein resides in the mitochondrion. Functionally, component of the mitochondrial ribosome (mitoribosome), a dedicated translation machinery responsible for the synthesis of mitochondrial genome-encoded proteins, including at least some of the essential transmembrane subunits of the mitochondrial respiratory chain. The mitoribosomes are attached to the mitochondrial inner membrane and translation products are cotranslationally integrated into the membrane. The polypeptide is Small ribosomal subunit protein uS9m (MRPS9) (Candida albicans (strain SC5314 / ATCC MYA-2876) (Yeast)).